A 429-amino-acid chain; its full sequence is Histidine--tRNA ligase (429 aa).

The protein belongs to the class-II aminoacyl-tRNA synthetase family. Homodimer.

It localises to the cytoplasm. The catalysed reaction is tRNA(His) + L-histidine + ATP = L-histidyl-tRNA(His) + AMP + diphosphate + H(+). This is Histidine--tRNA ligase from Prochlorococcus marinus subsp. pastoris (strain CCMP1986 / NIES-2087 / MED4).